The sequence spans 940 residues: Isoleucine--tRNA ligase (940 aa).

The 'HIGH' region signature appears at 58 to 68; the sequence is PYANGNIHIGH. Position 563 (Glu563) interacts with L-isoleucyl-5'-AMP. The 'KMSKS' region signature appears at 604-608; that stretch reads KMSKS. Lys607 is an ATP binding site. Zn(2+)-binding residues include Cys903, Cys906, Cys923, and Cys926.

This sequence belongs to the class-I aminoacyl-tRNA synthetase family. IleS type 1 subfamily. In terms of assembly, monomer. The cofactor is Zn(2+).

The protein resides in the cytoplasm. The enzyme catalyses tRNA(Ile) + L-isoleucine + ATP = L-isoleucyl-tRNA(Ile) + AMP + diphosphate. Catalyzes the attachment of isoleucine to tRNA(Ile). As IleRS can inadvertently accommodate and process structurally similar amino acids such as valine, to avoid such errors it has two additional distinct tRNA(Ile)-dependent editing activities. One activity is designated as 'pretransfer' editing and involves the hydrolysis of activated Val-AMP. The other activity is designated 'posttransfer' editing and involves deacylation of mischarged Val-tRNA(Ile). In Buchnera aphidicola subsp. Acyrthosiphon pisum (strain APS) (Acyrthosiphon pisum symbiotic bacterium), this protein is Isoleucine--tRNA ligase.